A 262-amino-acid chain; its full sequence is Nitrilase (262 aa).

The 236-residue stretch at 2-237 (VKVAYVQMNP…EEVGVAEIDL (236 aa)) folds into the CN hydrolase domain. The active-site Proton acceptor is the E42. The active-site Proton donor is K113. C146 (nucleophile) is an active-site residue. Position 173 to 174 (173 to 174 (VM)) interacts with substrate.

The protein belongs to the carbon-nitrogen hydrolase superfamily. Homodimer.

It catalyses the reaction a nitrile + 2 H2O = a carboxylate + NH4(+). Its activity is regulated as follows. Enzymatic activity is inhibited in the presence of acetone, methanol and metal ions such as Ag(2+) and Hg(2+). Is also inhibited by various thiol reagents such as DTNB, p-chloromercuribenzoate, p-hydroxymercuribenzoate, iodacetamide and iodacetate. EDTA has no influence on activity. Functionally, nitrilase that hydrolyzes preferentially aliphatic nitriles like malononitrile and fumaronitrile in vitro. These dinitriles are converted to the corresponding monoacid mononitriles, showing the enzyme is regioselective. Cannot hydrolyze compounds with a nitrile group bound to an aromatic ring or amino acid. Its biological role is unknown. This chain is Nitrilase, found in Pyrococcus abyssi (strain GE5 / Orsay).